Here is a 302-residue protein sequence, read N- to C-terminus: Ribosome-binding factor PSRP1, chloroplastic (302 aa).

A chloroplast-targeting transit peptide spans 1–66; that stretch reads MATLCTSAIN…SRNKPNVVCM (66 aa).

Binds to the mRNA channel of the chloroplast small ribosomal subunit and interacts with 16S sRNA nucleotides at the A-site and P-site.

It is found in the plastid. The protein resides in the chloroplast stroma. Functionally, ribosome-binding factor involved in light- and temperature-dependent control of protein synthesis. Interacts with 16S sRNA nucleotides at the A-site and P-site, where it protects the decoding center and inhibits translation by preventing tRNA binding. Stabilizes 70S ribosomes against dissociation. May be recycled by the combined action of ribosome-recycling factor (RRF) and EF-G. The protein is Ribosome-binding factor PSRP1, chloroplastic (PSRP1) of Spinacia oleracea (Spinach).